The following is a 202-amino-acid chain: MTYTLPELPYAYDALEPYIDVETMHLHHDKHHNTYVTNLNAAIEKHPELGEKSVENLISDMNAIPEDIRTAVRNNGGGHANHTFFWEIMAPNAGGQPTGAIKEAIDETFGSFDEMKAAFKTAATGRFGSGWAWLVVNNGKLEITSTPNQDSPLMDGQTPVLGLDVWEHAYYLKYKNVRPDYIEAFWNVVNWDKVNELFAAAK.

Fe cation-binding residues include histidine 27, histidine 82, aspartate 164, and histidine 168.

It belongs to the iron/manganese superoxide dismutase family. In terms of assembly, homodimer. The cofactor is Fe cation.

It carries out the reaction 2 superoxide + 2 H(+) = H2O2 + O2. Its function is as follows. Destroys superoxide anion radicals which are normally produced within the cells and which are toxic to biological systems. This chain is Superoxide dismutase [Fe] (sodA), found in Enterococcus faecalis (strain ATCC 700802 / V583).